Consider the following 61-residue polypeptide: Small ribosomal subunit protein uS14 (61 aa).

Residues C24, C27, C40, and C43 each contribute to the Zn(2+) site.

It belongs to the universal ribosomal protein uS14 family. Zinc-binding uS14 subfamily. As to quaternary structure, part of the 30S ribosomal subunit. Contacts proteins S3 and S10. It depends on Zn(2+) as a cofactor.

Its function is as follows. Binds 16S rRNA, required for the assembly of 30S particles and may also be responsible for determining the conformation of the 16S rRNA at the A site. The polypeptide is Small ribosomal subunit protein uS14 (Campylobacter curvus (strain 525.92)).